A 918-amino-acid chain; its full sequence is Non-lysosomal glucosylceramidase (918 aa).

Residues 886–918 are disordered; sequence HKKSRRPSVTQGTGLSTQPECGPKRSLANLNSE. A compositionally biased stretch (polar residues) spans 892 to 904; the sequence is PSVTQGTGLSTQP. Residue S893 is modified to Phosphoserine.

The protein belongs to the non-lysosomal glucosylceramidase family. In terms of tissue distribution, widely expressed at low level. Highly expressed in testis and brain. Ubiquitously expressed in the brain (at protein level). Expressed by Sertoli cells (at protein level).

The protein resides in the endoplasmic reticulum membrane. It is found in the golgi apparatus membrane. The catalysed reaction is a beta-D-glucosyl-(1&lt;-&gt;1')-N-acylsphing-4-enine + H2O = an N-acylsphing-4-enine + D-glucose. It carries out the reaction a beta-D-galactosyl-(1&lt;-&gt;1')-N-acylsphing-4-enine + H2O = an N-acylsphing-4-enine + D-galactose. The enzyme catalyses beta-D-glucosyl-(1-&gt;3)-O-lithocholate + H2O = lithocholate + D-glucose. It catalyses the reaction beta-D-glucosyl-(1-&gt;3)-O-chenodeoxycholate + H2O = chenodeoxycholate + D-glucose. The catalysed reaction is a di-trans,poly-cis-dolichyl beta-D-glucosyl phosphate + chenodeoxycholate = beta-D-glucosyl-(1-&gt;3)-O-chenodeoxycholate + a di-trans,poly-cis-dolichyl phosphate + H(+). It carries out the reaction octyl beta-D-glucose + chenodeoxycholate = beta-D-glucosyl-(1-&gt;3)-O-chenodeoxycholate + octan-1-ol. The enzyme catalyses cholesteryl 3-beta-D-glucoside + H2O = cholesterol + D-glucose. It catalyses the reaction a beta-D-glucosyl-(1&lt;-&gt;1')-N-acylsphing-4-enine + cholesterol = cholesteryl 3-beta-D-glucoside + an N-acylsphing-4-enine. The catalysed reaction is beta-D-glucosyl-N-(9Z-octadecenoyl)-sphing-4E-enine + cholesterol = N-(9Z-octadecenoyl)-sphing-4-enine + cholesteryl 3-beta-D-glucoside. It carries out the reaction a beta-D-galactosyl-(1&lt;-&gt;1')-N-acylsphing-4-enine + cholesterol = cholesteryl 3-beta-D-galactoside + an N-acylsphing-4-enine. The enzyme catalyses 1-(beta-D-galactosyl)-N-dodecanoylsphing-4-enine + cholesterol = cholesteryl 3-beta-D-galactoside + N-dodecanoylsphing-4-enine. It functions in the pathway lipid metabolism; sphingolipid metabolism. Its pathway is steroid metabolism; cholesterol metabolism. With respect to regulation, enzymatic activity is dependent on membrane association and requires the presence of lipids. Inhibited by N-(adamantanemethyloxypentyl)-deoxynojirimycin/AMP-DNM. Inhibited by its product sphingosine/N-acylsphing-4-enine in a feedback loop. Also inhibited by other non-acetylated sphingoid bases and their derivatives but not by sphingosine-1-phosphate and complex sphingolipids. Functionally, non-lysosomal glucosylceramidase that catalyzes the hydrolysis of glucosylceramides/GlcCers (such as beta-D-glucosyl-(1&lt;-&gt;1')-N-acylsphing-4-enine) to free glucose and ceramides (such as N-acylsphing-4-enine). GlcCers are membrane glycosphingolipids that have a wide intracellular distribution. They are the main precursors of more complex glycosphingolipids that play a role in cellular growth, differentiation, adhesion, signaling, cytoskeletal dynamics and membrane properties. Also involved in the transglucosylation of cholesterol, transferring glucose from GlcCer, thereby modifying its water solubility and biological properties. Under specific conditions, may catalyze the reverse reaction, transferring glucose from cholesteryl-3-beta-D-glucoside to ceramide (such as N-acylsphing-4-enine). May play a role in the metabolism of bile acids. Able to hydrolyze bile acid 3-O-glucosides as well as to produce bile acid-glucose conjugates thanks to a bile acid glucosyl transferase activity. Catalyzes the hydrolysis of galactosylceramides/GalCers (such as beta-D-galactosyl-(1&lt;-&gt;1')-N-acylsphing-4-enine), as well as galactosyl transfer between GalCers and cholesterol in vitro with lower activity compared with their activity against GlcCers. The sequence is that of Non-lysosomal glucosylceramidase from Mus musculus (Mouse).